Here is a 282-residue protein sequence, read N- to C-terminus: NADPH-dependent 7-cyano-7-deazaguanine reductase (282 aa).

Isoleucine 88–serine 90 serves as a coordination point for substrate. Residue serine 90–lysine 91 coordinates NADPH. Residue cysteine 190 is the Thioimide intermediate of the active site. Aspartate 197 (proton donor) is an active-site residue. Histidine 229–glutamate 230 serves as a coordination point for substrate. Residue arginine 258–glycine 259 participates in NADPH binding.

The protein belongs to the GTP cyclohydrolase I family. QueF type 2 subfamily. In terms of assembly, homodimer.

Its subcellular location is the cytoplasm. It catalyses the reaction 7-aminomethyl-7-carbaguanine + 2 NADP(+) = 7-cyano-7-deazaguanine + 2 NADPH + 3 H(+). It participates in tRNA modification; tRNA-queuosine biosynthesis. Its function is as follows. Catalyzes the NADPH-dependent reduction of 7-cyano-7-deazaguanine (preQ0) to 7-aminomethyl-7-deazaguanine (preQ1). The sequence is that of NADPH-dependent 7-cyano-7-deazaguanine reductase from Escherichia coli O45:K1 (strain S88 / ExPEC).